A 67-amino-acid polypeptide reads, in one-letter code: GRLFKITACVPSQTRIRTQRELQNTYFTKLVPYENWFREQQRIQKMGGKIVKVELATGKQGINTGLA.

Residues 1–56 (GRLFKITACVPSQTRIRTQRELQNTYFTKLVPYENWFREQQRIQKMGGKIVKVELA) enclose the CpcD-like domain.

The protein belongs to the phycobilisome linker protein family.

It localises to the cellular thylakoid membrane. In terms of biological role, rod linker protein, associated with allophycocyanin. Linker polypeptides determine the state of aggregation and the location of the disk-shaped phycobiliprotein units within the phycobilisome and modulate their spectroscopic properties in order to mediate a directed and optimal energy transfer. This chain is Phycobilisome 7.8 kDa linker polypeptide, allophycocyanin-associated, core (apcC), found in Mastigocladus laminosus (Fischerella sp.).